Consider the following 675-residue polypeptide: Transketolase, chloroplastic (675 aa).

Thiamine diphosphate contacts are provided by residues His78 and 127–129 (GPL). Asp168 lines the Mg(2+) pocket. Positions 169, 173, and 198 each coordinate thiamine diphosphate. Residues Asn198 and Ile200 each contribute to the Mg(2+) site. Residue His275 participates in thiamine diphosphate binding. Substrate-binding residues include His275, Arg369, and Ser396. Residues Glu423 and 450–453 (FTDY) contribute to the thiamine diphosphate site. Glu423 functions as the Proton donor in the catalytic mechanism. Residues His474, Asp482, and Arg533 each contribute to the substrate site.

In terms of assembly, homodimer. The cofactor is Mg(2+). It depends on Ca(2+) as a cofactor. Mn(2+) is required as a cofactor. Co(2+) serves as cofactor. Requires thiamine diphosphate as cofactor.

It localises to the plastid. It is found in the chloroplast thylakoid membrane. It catalyses the reaction D-sedoheptulose 7-phosphate + D-glyceraldehyde 3-phosphate = aldehydo-D-ribose 5-phosphate + D-xylulose 5-phosphate. It functions in the pathway carbohydrate biosynthesis; Calvin cycle. Functionally, catalyzes the reversible transfer of a two-carbon ketol group from fructose-6-phosphate or sedoheptulose-7-phosphate to glyceraldehyde-3-phosphate to yield xylulose-5-phosphate and erythrose-4-phosphate or ribose-5-phosphate, respectively. This is Transketolase, chloroplastic from Zea mays (Maize).